The sequence spans 283 residues: Acetylglutamate kinase (283 aa).

Residues 64-65 (GG), Arg-86, and Asn-178 contribute to the substrate site.

The protein belongs to the acetylglutamate kinase family. ArgB subfamily.

Its subcellular location is the cytoplasm. It carries out the reaction N-acetyl-L-glutamate + ATP = N-acetyl-L-glutamyl 5-phosphate + ADP. The protein operates within amino-acid biosynthesis; L-arginine biosynthesis; N(2)-acetyl-L-ornithine from L-glutamate: step 2/4. In terms of biological role, catalyzes the ATP-dependent phosphorylation of N-acetyl-L-glutamate. This Lactococcus lactis subsp. cremoris (strain SK11) protein is Acetylglutamate kinase.